The sequence spans 199 residues: Recombination protein RecR (199 aa).

The C4-type zinc-finger motif lies at 57 to 72 (CEICGNMDTENICRIC). The 96-residue stretch at 80–175 (SVIAIVETVA…KISRLASGIP (96 aa)) folds into the Toprim domain.

It belongs to the RecR family.

Functionally, may play a role in DNA repair. It seems to be involved in an RecBC-independent recombinational process of DNA repair. It may act with RecF and RecO. The protein is Recombination protein RecR of Rickettsia canadensis (strain McKiel).